The sequence spans 347 residues: Chlorophyllase type 0 (347 aa).

A signal peptide spans 1–19 (MAKLLLLIFGVFIFVNSQA). The propeptide occupies 20-30 (QTFPTILEKHN). The GXSXG motif lies at 160-164 (GHSRG). S162 (nucleophile) is an active-site residue. The active-site Charge relay system is the D191. 3 N-linked (GlcNAc...) asparagine glycosylation sites follow: N215, N229, and N251. Catalysis depends on H262, which acts as the Charge relay system. N-linked (GlcNAc...) asparagine glycosylation is present at N321.

Belongs to the AB hydrolase superfamily. Lipase family.

The enzyme catalyses a chlorophyll + H2O = a chlorophyllide + phytol + H(+). The catalysed reaction is chlorophyll a + H2O = phytol + chlorophyllide a + H(+). The protein operates within porphyrin-containing compound metabolism; chlorophyll degradation. With respect to regulation, inhibited by diisopropyl fluorophosphate (DFP), phenylmethanesulfonyl fluoride (PMSF) or p-chloromercuribenzoic acid (PCMB), but not by N-ethylmaleimide (NEM) or iodoacetamide. Catalyzes the hydrolysis of ester bond in chlorophyll to yield chlorophyllide and phytol. This Chenopodium album (Fat hen) protein is Chlorophyllase type 0.